Reading from the N-terminus, the 594-residue chain is Membrane protein insertase YidC (594 aa).

A helical transmembrane segment spans residues 7–27 (YFVAIALSVLILIAWQFFYVS). Positions 36–73 (AAEQAQQAQQTQQQPGAQPAAPGQALPGGAIPSAGESR) are disordered. A compositionally biased stretch (low complexity) spans 37–65 (AEQAQQAQQTQQQPGAQPAAPGQALPGGA). Helical transmembrane passes span 369 to 389 (LFGN…LIFF), 443 to 463 (WPIL…YVTI), 488 to 508 (LFGL…WPII), and 532 to 552 (FTWM…GLVI).

Belongs to the OXA1/ALB3/YidC family. Type 1 subfamily. In terms of assembly, interacts with the Sec translocase complex via SecD. Specifically interacts with transmembrane segments of nascent integral membrane proteins during membrane integration.

It is found in the cell inner membrane. Its function is as follows. Required for the insertion and/or proper folding and/or complex formation of integral membrane proteins into the membrane. Involved in integration of membrane proteins that insert both dependently and independently of the Sec translocase complex, as well as at least some lipoproteins. Aids folding of multispanning membrane proteins. In Rhizobium meliloti (strain 1021) (Ensifer meliloti), this protein is Membrane protein insertase YidC.